The sequence spans 298 residues: Replication protein A 32 kDa subunit B (298 aa).

The segment at residues 89 to 163 is a DNA-binding region (OB); that stretch reads VRLVGRMLNK…QVVAYSVRRI (75 aa).

Belongs to the replication factor A protein 2 family. Heterotrimer of RPA1, RPA2 and RPA3 (canonical replication protein A complex). Interacts with RPA1A and RPA3. In terms of processing, phosphorylated in a cell-cycle-dependent manner (from the S phase until mitosis). In response to DNA damage, recruited to DNA-repair nuclear foci, as a hypophosphorylated form.

It is found in the nucleus. Component of the replication protein A complex (RPA) required for DNA recombination, repair and replication. The activity of RPA is mediated by single-stranded DNA binding and protein interactions. In Oryza sativa subsp. japonica (Rice), this protein is Replication protein A 32 kDa subunit B (RPA2B).